Here is a 157-residue protein sequence, read N- to C-terminus: 2-C-methyl-D-erythritol 2,4-cyclodiphosphate synthase (157 aa).

A divalent metal cation contacts are provided by Asp8 and His10. Residues 8-10 and 34-35 each bind 4-CDP-2-C-methyl-D-erythritol 2-phosphate; these read DVH and HS. An a divalent metal cation-binding site is contributed by His42. Residues 56-58, 61-65, 100-106, 132-135, Phe139, and Arg142 contribute to the 4-CDP-2-C-methyl-D-erythritol 2-phosphate site; these read DIG, FPDTD, AQAPKMA, and TTTE.

This sequence belongs to the IspF family. Homotrimer. A divalent metal cation serves as cofactor.

The enzyme catalyses 4-CDP-2-C-methyl-D-erythritol 2-phosphate = 2-C-methyl-D-erythritol 2,4-cyclic diphosphate + CMP. It functions in the pathway isoprenoid biosynthesis; isopentenyl diphosphate biosynthesis via DXP pathway; isopentenyl diphosphate from 1-deoxy-D-xylulose 5-phosphate: step 4/6. Its function is as follows. Involved in the biosynthesis of isopentenyl diphosphate (IPP) and dimethylallyl diphosphate (DMAPP), two major building blocks of isoprenoid compounds. Catalyzes the conversion of 4-diphosphocytidyl-2-C-methyl-D-erythritol 2-phosphate (CDP-ME2P) to 2-C-methyl-D-erythritol 2,4-cyclodiphosphate (ME-CPP) with a corresponding release of cytidine 5-monophosphate (CMP). The chain is 2-C-methyl-D-erythritol 2,4-cyclodiphosphate synthase from Stutzerimonas stutzeri (strain A1501) (Pseudomonas stutzeri).